The following is a 227-amino-acid chain: Cytochrome c oxidase subunit 2 (227 aa).

The Mitochondrial intermembrane segment spans residues 1–14 (MAYPFQLGLQDATS). The chain crosses the membrane as a helical span at residues 15 to 45 (PIMEELLHFHDHTLMIVFLISSLVLYIISSM). The Mitochondrial matrix portion of the chain corresponds to 46–59 (LTTKLTHTSTMDAQ). A helical membrane pass occupies residues 60–87 (EVETVWTILPAIILVLIALPSLRILYMM). Residues 88–227 (DEINNPSLTV…YFETWSALML (140 aa)) are Mitochondrial intermembrane-facing. Residues histidine 161, cysteine 196, glutamate 198, cysteine 200, histidine 204, and methionine 207 each contribute to the Cu cation site. Glutamate 198 is a binding site for Mg(2+). Tyrosine 218 is modified (phosphotyrosine).

The protein belongs to the cytochrome c oxidase subunit 2 family. Component of the cytochrome c oxidase (complex IV, CIV), a multisubunit enzyme composed of 14 subunits. The complex is composed of a catalytic core of 3 subunits MT-CO1, MT-CO2 and MT-CO3, encoded in the mitochondrial DNA, and 11 supernumerary subunits COX4I, COX5A, COX5B, COX6A, COX6B, COX6C, COX7A, COX7B, COX7C, COX8 and NDUFA4, which are encoded in the nuclear genome. The complex exists as a monomer or a dimer and forms supercomplexes (SCs) in the inner mitochondrial membrane with NADH-ubiquinone oxidoreductase (complex I, CI) and ubiquinol-cytochrome c oxidoreductase (cytochrome b-c1 complex, complex III, CIII), resulting in different assemblies (supercomplex SCI(1)III(2)IV(1) and megacomplex MCI(2)III(2)IV(2)). Found in a complex with TMEM177, COA6, COX18, COX20, SCO1 and SCO2. Interacts with TMEM177 in a COX20-dependent manner. Interacts with COX20. Interacts with COX16. It depends on Cu cation as a cofactor.

The protein resides in the mitochondrion inner membrane. It catalyses the reaction 4 Fe(II)-[cytochrome c] + O2 + 8 H(+)(in) = 4 Fe(III)-[cytochrome c] + 2 H2O + 4 H(+)(out). Functionally, component of the cytochrome c oxidase, the last enzyme in the mitochondrial electron transport chain which drives oxidative phosphorylation. The respiratory chain contains 3 multisubunit complexes succinate dehydrogenase (complex II, CII), ubiquinol-cytochrome c oxidoreductase (cytochrome b-c1 complex, complex III, CIII) and cytochrome c oxidase (complex IV, CIV), that cooperate to transfer electrons derived from NADH and succinate to molecular oxygen, creating an electrochemical gradient over the inner membrane that drives transmembrane transport and the ATP synthase. Cytochrome c oxidase is the component of the respiratory chain that catalyzes the reduction of oxygen to water. Electrons originating from reduced cytochrome c in the intermembrane space (IMS) are transferred via the dinuclear copper A center (CU(A)) of subunit 2 and heme A of subunit 1 to the active site in subunit 1, a binuclear center (BNC) formed by heme A3 and copper B (CU(B)). The BNC reduces molecular oxygen to 2 water molecules using 4 electrons from cytochrome c in the IMS and 4 protons from the mitochondrial matrix. This Speothos venaticus (Bush dog) protein is Cytochrome c oxidase subunit 2 (MT-CO2).